Reading from the N-terminus, the 746-residue chain is Exostosin-1 (746 aa).

Over methionine 1–tyrosine 7 the chain is Cytoplasmic. The chain crosses the membrane as a helical; Signal-anchor for type II membrane protein span at residues phenylalanine 8 to phenylalanine 28. Residues arginine 29 to leucine 746 lie on the Lumenal side of the membrane. A glycan (N-linked (GlcNAc...) asparagine) is linked at asparagine 89. 2 cysteine pairs are disulfide-bonded: cysteine 98–cysteine 103 and cysteine 109–cysteine 152. Leucine 166 and tyrosine 203 together coordinate a protein. The UDP site is built by lysine 267, lysine 269, tyrosine 271, and arginine 280. Cysteine 298 and cysteine 312 form a disulfide bridge. Residue histidine 300 participates in a protein binding. UDP-binding residues include tyrosine 319 and tyrosine 324. Residue asparagine 330 is glycosylated (N-linked (GlcNAc...) asparagine). 2 disulfide bridges follow: cysteine 334-cysteine 355 and cysteine 652-cysteine 704. UDP is bound by residues arginine 346 and glutamate 349.

It belongs to the glycosyltransferase 47 family. In terms of assembly, part of the heparan sulfate polymerase, a dimeric complex composed of EXT1 and EXT2. Could also form homooligomeric complexes. Interacts with NDST1. Post-translationally, N-glycosylated.

The protein localises to the golgi apparatus membrane. It localises to the golgi apparatus. Its subcellular location is the cis-Golgi network membrane. The protein resides in the endoplasmic reticulum membrane. It catalyses the reaction 3-O-{alpha-D-GlcNAc-[(1-&gt;4)-beta-D-GlcA-(1-&gt;4)-alpha-D-GlcNAc](n)-(1-&gt;4)-beta-D-GlcA-(1-&gt;3)-beta-D-Gal-(1-&gt;3)-beta-D-Gal-(1-&gt;4)-beta-D-Xyl}-L-seryl-[protein] + UDP-alpha-D-glucuronate = 3-O-{[(1-&gt;4)-beta-D-GlcA-(1-&gt;4)-alpha-D-GlcNAc](n+1)-(1-&gt;4)-beta-D-GlcA-(1-&gt;3)-beta-D-Gal-(1-&gt;3)-beta-D-Gal-(1-&gt;4)-beta-D-Xyl}-L-seryl-[protein] + UDP + H(+). Its pathway is protein modification; protein glycosylation. Glycosyltransferase forming with EXT2 the heterodimeric heparan sulfate polymerase which catalyzes the elongation of the heparan sulfate glycan backbone. Glycan backbone extension consists in the alternating transfer of (1-&gt;4)-beta-D-GlcA and (1-&gt;4)-alpha-D-GlcNAc residues from their respective UDP-sugar donors. Both EXT1 and EXT2 are required for the full activity of the polymerase since EXT1 bears the N-acetylglucosaminyl-proteoglycan 4-beta-glucuronosyltransferase activity within the complex while EXT2 carries the glucuronosyl-N-acetylglucosaminyl-proteoglycan 4-alpha-N-acetylglucosaminyltransferase activity. Heparan sulfate proteoglycans are ubiquitous components of the extracellular matrix and play an important role in tissue homeostasis and signaling. The sequence is that of Exostosin-1 from Mus musculus (Mouse).